The chain runs to 293 residues: GDT1-like protein 3 (293 aa).

The N-terminal stretch at Met-1–Gly-25 is a signal peptide. The next 6 membrane-spanning stretches (helical) occupy residues Phe-89–Ala-109, Ala-115–Leu-135, Thr-148–Trp-168, Leu-200–Glu-220, Ala-238–Val-258, and Val-272–Pro-292.

It belongs to the GDT1 family.

Its subcellular location is the membrane. The protein is GDT1-like protein 3 of Arabidopsis thaliana (Mouse-ear cress).